The sequence spans 447 residues: Chordin-like protein 1 (447 aa).

The N-terminal stretch at 1–22 (MDGMKYIISLFFIFVFLEGSKT) is a signal peptide. 2 consecutive VWFC domains span residues 30-95 (TYCV…PRCP) and 108-174 (KSCE…RVCR). The N-linked (GlcNAc...) asparagine glycan is linked to Asn113. A Cell attachment site motif is present at residues 174 to 176 (RGD). Positions 200–224 (SYLRSPYDPPPNRQAGGLPRFPGSR) are disordered. The 66-residue stretch at 253 to 318 (QVCVSNGKTY…IDGKCCKVCP (66 aa)) folds into the VWFC 3 domain. N-linked (GlcNAc...) asparagine glycosylation is present at Asn286.

May be glycosylated. In terms of tissue distribution, expressed in heart, brain, lung, liver, kidney and testis.

It localises to the secreted. Seems to antagonize the function of BMP4 by binding to it and preventing its interaction with receptors. Alters the fate commitment of neural stem cells from gliogenesis to neurogenesis. Contributes to neuronal differentiation of neural stem cells in the brain by preventing the adoption of a glial fate. May play a crucial role in dorsoventral axis formation. Antagonizes the function of BMP7 and may thus play an important role in the embryonic bone formation. Shows no inhibitory effect on the inducing activity of BMP2. Plays a role during anterior segment eye development. The sequence is that of Chordin-like protein 1 (Chrdl1) from Mus musculus (Mouse).